We begin with the raw amino-acid sequence, 270 residues long: UPF0162 protein PA3419 (270 aa).

This sequence belongs to the UPF0162 family.

In Pseudomonas aeruginosa (strain ATCC 15692 / DSM 22644 / CIP 104116 / JCM 14847 / LMG 12228 / 1C / PRS 101 / PAO1), this protein is UPF0162 protein PA3419.